A 473-amino-acid chain; its full sequence is MKKGRVSQVLGPVVDVRFEDGHLPAIYNAIKVSQPATGENEVGIDLTLEVALHLGDDTVRTIAMASTDGIQRGMEAVDTGAPISVPVGDVTLGRVFNVLGDKIDLNEPLPADAQKDPIHRSAPSFDELSTEVEILETGIKVVDLLAPYIKGGKIGLFGGAGVGKTVLIQELINNIAQEHGGISVFAGVGERTREGNDLFYEMSDSGVIKKTAMVFGQMNEPPGARMRVALTGLTMAEHFRDKQGQDVLFFIDNIFRFTQAGSEVSALLGRMPSAVGYQPTLATEMGQLQERITSTNVGSVTSIQAIYVPADDYTDPAPATTFAHLDATTNLERKLTEMGIYPAVDPLASTSRALAPEIVGEEHYAVAREVQSTLQRYKELQDIIAILGMDELGEEDKLVVHRARRIQFFLSQNFHVAEQFTGQKGSYVPVKETVRGFKEILSGKYDHLPEDAFRLVGRIEEVIENAKEMGVEV.

158 to 165 serves as a coordination point for ATP; sequence GGAGVGKT.

The protein belongs to the ATPase alpha/beta chains family. F-type ATPases have 2 components, CF(1) - the catalytic core - and CF(0) - the membrane proton channel. CF(1) has five subunits: alpha(3), beta(3), gamma(1), delta(1), epsilon(1). CF(0) has three main subunits: a(1), b(2) and c(9-12). The alpha and beta chains form an alternating ring which encloses part of the gamma chain. CF(1) is attached to CF(0) by a central stalk formed by the gamma and epsilon chains, while a peripheral stalk is formed by the delta and b chains.

Its subcellular location is the cell membrane. The enzyme catalyses ATP + H2O + 4 H(+)(in) = ADP + phosphate + 5 H(+)(out). Produces ATP from ADP in the presence of a proton gradient across the membrane. The catalytic sites are hosted primarily by the beta subunits. In Bacillus velezensis (strain DSM 23117 / BGSC 10A6 / LMG 26770 / FZB42) (Bacillus amyloliquefaciens subsp. plantarum), this protein is ATP synthase subunit beta.